Here is a 363-residue protein sequence, read N- to C-terminus: Teichoic acids export ATP-binding protein TagH (363 aa).

Positions 27–246 constitute an ABC transporter domain; that stretch reads KHFFNIGNVD…YRKFSKDFKA (220 aa). Position 60–67 (60–67) interacts with ATP; that stretch reads GINGSGKS. A unknown region spans residues 247–363; that stretch reads QTAAYRKKYQ…KSQSVLFNSK (117 aa).

The protein belongs to the ABC transporter superfamily. Teichoic acids exporter (TC 3.A.1.104.1) family. In terms of assembly, the complex is composed of two ATP-binding proteins (TagH) and two transmembrane proteins (TagG).

The protein resides in the cell membrane. It catalyses the reaction ATP + H2O + teichoic acidSide 1 = ADP + phosphate + teichoic acidSide 2.. Its function is as follows. Part of the ABC transporter complex TagGH involved in teichoic acids export. Responsible for energy coupling to the transport system. The chain is Teichoic acids export ATP-binding protein TagH from Lactiplantibacillus plantarum (strain ATCC BAA-793 / NCIMB 8826 / WCFS1) (Lactobacillus plantarum).